The following is an 88-amino-acid chain: Synaptonemal complex central element protein 3 (88 aa).

Residues 8–75 (ERSYDNMLKM…FLNCKEEMEK (68 aa)) adopt a coiled-coil conformation.

In terms of assembly, homodimer. Can form higher-order homooligomers. Interacts with SYCP1 (via tetrameric core); the interaction remodels SYCP1 homotetramers to 2:1 heterotrimers with SYCE3. SYCP1/SYCE3 heterotrimers form lattice assemblies as part of the mature synaptonemal complex via both lateral and head-to-head interactions. Interacts with the SYCE1-SIX6OS1 complex; the interaction recruits the SYCE1-SIX6OS1 complex to the central element of the synaptonemal complex. Interacts with the SYCE2-TEX12 complex; the interaction promotes fibrous assembly of SYCE2-TEX12 as part of the synaptonemal complex central element. Interacts with SYCE1. Interacts with SYCE2. Interacts with proteasome subunit PSMA8; to participate in meiosis progression during spermatogenesis. Interacts with SPO16. Expression is restricted to spermatocytes and is absent in spermatogonia, spermatids and spermatogonia (at protein level). Expressed in adult testis and embryonic ovary. Expressed in the convoluted seminiferous tubules in spermatogonia and spermatocytes.

Its subcellular location is the nucleus. It localises to the chromosome. Its function is as follows. Major component of the transverse central element of synaptonemal complexes (SCS), formed between homologous chromosomes during meiotic prophase. Required for the assembly of the central element of the synaptonemal complex during meiosis, via remodeling of SYCP1 lattice structures and promoting recruitment of SYCE2-TEX12 and SYCE1-SIX60S1 complexes. Required for chromosome loading of the central element-specific SCS proteins, and for initiating synapsis between homologous chromosomes. Chromosome loading appears to require SYCP1. Required for fertility and normal testis development. May play a role in apoptosis of spermatogenic cells and pathogenesis of cryptorchidism. This is Synaptonemal complex central element protein 3 from Mus musculus (Mouse).